A 254-amino-acid chain; its full sequence is tRNA uridine(34) hydroxylase (254 aa).

The region spanning 123–217 is the Rhodanese domain; it reads QDPNVILLDT…YLESIPESES (95 aa). Cys177 (cysteine persulfide intermediate) is an active-site residue.

Belongs to the TrhO family.

It catalyses the reaction uridine(34) in tRNA + AH2 + O2 = 5-hydroxyuridine(34) in tRNA + A + H2O. Catalyzes oxygen-dependent 5-hydroxyuridine (ho5U) modification at position 34 in tRNAs. The sequence is that of tRNA uridine(34) hydroxylase from Legionella pneumophila (strain Corby).